The primary structure comprises 448 residues: Deoxyguanosinetriphosphate triphosphohydrolase-like protein (448 aa).

Residues 67–260 form the HD domain; sequence RLTHSLEVSQ…MELADDIAYG (194 aa).

Belongs to the dGTPase family. Type 2 subfamily.

The chain is Deoxyguanosinetriphosphate triphosphohydrolase-like protein from Aliivibrio salmonicida (strain LFI1238) (Vibrio salmonicida (strain LFI1238)).